A 390-amino-acid polypeptide reads, in one-letter code: MAQRYDDLPHYGGMDGVGIPSTMYGDPHAARSMQPVHHLNHGPPLHSHQYPHTAHTNAMAPSMGSSVNDALKRDKDAIYGHPLFPLLALIFEKCELATCTPREPGVAGGDVCSSESFNEDIAVFAKQIRAEKPLFSSNPELDNLMIQAIQVLRFHLLELEKVHELCDNFCHRYISCLKGKMPIDLVIDDREGGSKSDSEDVTRSANLTDQPSWNRDHDDTASTRSGGTPGPSSGGHTSHSGDNSSEQGDGLDNSVASPSTGDDDDPDKDKKRHKKRGIFPKVATNIMRAWLFQHLTHPYPSEEQKKQLAQDTGLTILQVNNWFINARRRIVQPMIDQSNRAVSQGTPYNPDGQPMGGFVMDGQQHMGIRAPGPMSGMGMNMGMEGQWHYM.

Residues 108 to 192 enclose the MEIS N-terminal domain; it reads GGDVCSSESF…IDLVIDDREG (85 aa). Residues 190–202 are compositionally biased toward basic and acidic residues; that stretch reads REGGSKSDSEDVT. The interval 190–279 is disordered; it reads REGGSKSDSE…KKRHKKRGIF (90 aa). A compositionally biased stretch (polar residues) spans 203-213; the sequence is RSANLTDQPSW. Positions 272-334 form a DNA-binding region, homeobox; TALE-type; that stretch reads RHKKRGIFPK…NARRRIVQPM (63 aa). Residues 299–329 are interaction with DNA; it reads YPSEEQKKQLAQDTGLTILQVNNWFINARRR. Residues 335 to 390 are required for transcriptional activation; sequence IDQSNRAVSQGTPYNPDGQPMGGFVMDGQQHMGIRAPGPMSGMGMNMGMEGQWHYM.

Belongs to the TALE/MEIS homeobox family. As to quaternary structure, interacts with the N-terminal region of PBX1 to form a heterodimer which binds DNA including a cAMP-responsive sequence in CYP17. Also forms heterodimers with PBX2. Forms heterotrimers with PBX1 or PBX2 and a number of HOX proteins including HOXA9, HOXD4 and HOXD9 where it acts as a non-DNA-binding partner. Also forms heterotrimers with PBX1 and HOX proteins including HOXD9 and HOXD10 where PBX1 is the non-DNA-binding partner. Heterodimer with DLX3. Heterodimer with HOXB13. Expressed at high levels in the lung with lower levels detected in the heart and brain. Expressed in pancreatic islets (beta-cells and non-beta-cells).

It is found in the nucleus. Functionally, acts as a transcriptional regulator of PAX6. Also acts as a transcriptional activator of PF4 in complex with PBX1 or PBX2. Required for hematopoiesis, megakaryocyte lineage development and vascular patterning. May function as a cofactor for HOXA7 and HOXA9 in the induction of myeloid leukemias. This chain is Homeobox protein Meis1 (Meis1), found in Mus musculus (Mouse).